We begin with the raw amino-acid sequence, 546 residues long: Hexose oxidase (546 aa).

Residues 40-222 (IGTNIDFVYV…TKYYFKDLPM (183 aa)) enclose the FAD-binding PCMH-type domain. A cross-link (6-(S-cysteinyl)-8alpha-(pros-histidyl)-FAD (His-Cys)) is located at residues 79 to 138 (HCYEDFVFDECVKAIINVTGLVESGYDDDRGYFVSSGDTNWGSFKTLFRDHGRVLPGGSC). Residues Asn95 and Asn358 are each glycosylated (N-linked (GlcNAc...) asparagine).

Belongs to the oxygen-dependent FAD-linked oxidoreductase family. In terms of assembly, homodimer. Requires FAD as cofactor. Post-translationally, cleaved into 40 kDa and 29 kDa cleavage products, but the 2 polypeptide chains do not separate and seem to be physically linked together. The FAD cofactor is bound via a bicovalent 6-S-cysteinyl, 8alpha-N1-histidyl FAD linkage.

It catalyses the reaction beta-D-glucose + O2 = D-glucono-1,5-lactone + H2O2. The catalysed reaction is D-galactose + O2 = D-galactono-1,5-lactone + H2O2. The enzyme catalyses D-maltose + O2 = D-maltobiono-1,5-lactone + H2O2. It carries out the reaction D-cellobiose + O2 = D-cellobiono-1,5-lactone + H2O2. It catalyses the reaction beta-lactose + O2 = lactobiono-1,5-lactone + H2O2. Its function is as follows. Catalyzes the selective oxidation of C1 hydroxyl moieties on mono- and disaccharides with concomitant reduction of molecular oxygen to hydrogen peroxide. This results in the formation of the corresponding lactones, which typically undergo spontaneous hydrolysis. Hexose oxidase is able to oxidize a variety of substrates including D-glucose, D-galactose, maltose, cellobiose, and lactose. This chain is Hexose oxidase (HOX), found in Chondrus crispus (Carrageen Irish moss).